Consider the following 463-residue polypeptide: Glycine--tRNA ligase (463 aa).

Positions 102 and 165 each coordinate substrate. ATP contacts are provided by residues 197 to 199 (RNE), 207 to 212 (FRTREF), 284 to 285 (EL), and 328 to 331 (GLTR). Residue 212–216 (FEQME) participates in substrate binding. Substrate is bound at residue 324–328 (EPAAG).

This sequence belongs to the class-II aminoacyl-tRNA synthetase family. As to quaternary structure, homodimer.

It localises to the cytoplasm. It carries out the reaction tRNA(Gly) + glycine + ATP = glycyl-tRNA(Gly) + AMP + diphosphate. Functionally, catalyzes the attachment of glycine to tRNA(Gly). The polypeptide is Glycine--tRNA ligase (Mycobacterium bovis (strain ATCC BAA-935 / AF2122/97)).